The chain runs to 95 residues: MRKYEIMYIIRPDVDEESKKAVVERFNNILTTNGAEITETKDWGKRRLAYEINDFRDGFYQILNVQAGAEAVQEFDRLAKISDDIIRHIVVKEEE.

It belongs to the bacterial ribosomal protein bS6 family.

Functionally, binds together with bS18 to 16S ribosomal RNA. In Bacillus licheniformis (strain ATCC 14580 / DSM 13 / JCM 2505 / CCUG 7422 / NBRC 12200 / NCIMB 9375 / NCTC 10341 / NRRL NRS-1264 / Gibson 46), this protein is Small ribosomal subunit protein bS6.